Reading from the N-terminus, the 77-residue chain is Fungal protease inhibitor F (77 aa).

Positions 1–22 (MASKNLFVLFFIFALFAANIAA) are cleaved as a signal peptide. Disulfide bonds link Cys-25/Cys-57, Cys-36/Cys-49, Cys-40/Cys-77, and Cys-59/Cys-71.

This sequence belongs to the protease inhibitor I40 family. In terms of tissue distribution, hemolymph.

The protein localises to the secreted. Highly specific for fungal protease and subtilisin. The polypeptide is Fungal protease inhibitor F (Bombyx mori (Silk moth)).